A 335-amino-acid chain; its full sequence is Methionine aminopeptidase 1D, mitochondrial (335 aa).

A mitochondrion-targeting transit peptide spans 1–19 (MAAPSGVHLLVRRGSHRIF). His-161 provides a ligand contact to substrate. A divalent metal cation contacts are provided by Asp-178, Asp-189, and His-252. His-259 is a binding site for substrate. 2 residues coordinate a divalent metal cation: Glu-284 and Glu-315.

The protein belongs to the peptidase M24A family. Methionine aminopeptidase type 1 subfamily. Co(2+) serves as cofactor. The cofactor is Zn(2+). It depends on Mn(2+) as a cofactor. Fe(2+) is required as a cofactor. In terms of tissue distribution, overexpressed in colon cancer cell lines and colon tumors as compared to normal tissues (at protein level).

The protein resides in the mitochondrion. The catalysed reaction is Release of N-terminal amino acids, preferentially methionine, from peptides and arylamides.. Functionally, removes the N-terminal methionine from nascent proteins. The N-terminal methionine is often cleaved when the second residue in the primary sequence is small and uncharged (Met-Ala-, Cys, Gly, Pro, Ser, Thr, or Val). Requires deformylation of the N(alpha)-formylated initiator methionine before it can be hydrolyzed. May play a role in colon tumorigenesis. This is Methionine aminopeptidase 1D, mitochondrial (METAP1D) from Homo sapiens (Human).